Here is a 221-residue protein sequence, read N- to C-terminus: Adenylate kinase (221 aa).

10–15 (GAGKGT) is an ATP binding site. The NMP stretch occupies residues 30–59 (STGDMLRAAVKARTELGVAAKKIMDAGGLV). AMP contacts are provided by residues Thr-31, Arg-36, 57–59 (GLV), 85–88 (GFPR), and Gln-92. Residues 122–159 (GRRVHLASGRTYHIKFNPPKVEGKDDITGDPLIQRDDD) form an LID region. ATP is bound by residues Arg-123 and 132-133 (TY). Arg-156 and Arg-167 together coordinate AMP. Residue Ser-207 coordinates ATP.

This sequence belongs to the adenylate kinase family. As to quaternary structure, monomer.

The protein localises to the cytoplasm. It catalyses the reaction AMP + ATP = 2 ADP. Its pathway is purine metabolism; AMP biosynthesis via salvage pathway; AMP from ADP: step 1/1. Functionally, catalyzes the reversible transfer of the terminal phosphate group between ATP and AMP. Plays an important role in cellular energy homeostasis and in adenine nucleotide metabolism. The protein is Adenylate kinase of Polynucleobacter necessarius subsp. necessarius (strain STIR1).